The chain runs to 502 residues: Glycerol kinase (502 aa).

Residue T14 coordinates ADP. Residues T14, T15, and S16 each contribute to the ATP site. T14 lines the sn-glycerol 3-phosphate pocket. R18 lines the ADP pocket. Sn-glycerol 3-phosphate-binding residues include R84, E85, and Y136. The glycerol site is built by R84, E85, and Y136. H232 is modified (phosphohistidine; by HPr). Position 246 (D246) interacts with sn-glycerol 3-phosphate. The glycerol site is built by D246 and Q247. ADP-binding residues include T268 and G311. Positions 268, 311, 315, and 412 each coordinate ATP. Residues G412 and N416 each coordinate ADP.

The protein belongs to the FGGY kinase family. Homotetramer and homodimer (in equilibrium). The phosphoenolpyruvate-dependent sugar phosphotransferase system (PTS), including enzyme I, and histidine-containing protein (HPr) are required for the phosphorylation, which leads to the activation of the enzyme.

The catalysed reaction is glycerol + ATP = sn-glycerol 3-phosphate + ADP + H(+). Its pathway is polyol metabolism; glycerol degradation via glycerol kinase pathway; sn-glycerol 3-phosphate from glycerol: step 1/1. Activated by phosphorylation and inhibited by fructose 1,6-bisphosphate (FBP). Its function is as follows. Key enzyme in the regulation of glycerol uptake and metabolism. Catalyzes the phosphorylation of glycerol to yield sn-glycerol 3-phosphate. The protein is Glycerol kinase of Streptococcus pneumoniae (strain 70585).